The chain runs to 81 residues: MDSYSAKIRANLVCRRSTDPSIRVTFSSRSLGSLPAFAMFRSSRPSFIKICFPFSSSIVLASGYSVRASMRSSFERQNRSE.

Expressed in brain, notably in regions involved in long-term potentiation and long-term depression, such as hippocampal CA1 and CA3, dentate gyrus and cerebellar Purkinje layer.

The sequence is that of Putative CNGA1-overlapping antisense gene protein from Homo sapiens (Human).